Here is a 334-residue protein sequence, read N- to C-terminus: tRNA uridine(34) hydroxylase (334 aa).

The Rhodanese domain maps to 123 to 217; sequence SDPDVILVDT…YLEEVKAEES (95 aa). Cys177 serves as the catalytic Cysteine persulfide intermediate.

It belongs to the TrhO family.

The enzyme catalyses uridine(34) in tRNA + AH2 + O2 = 5-hydroxyuridine(34) in tRNA + A + H2O. Catalyzes oxygen-dependent 5-hydroxyuridine (ho5U) modification at position 34 in tRNAs. This Shewanella baltica (strain OS185) protein is tRNA uridine(34) hydroxylase.